The following is a 131-amino-acid chain: Ribonuclease VapC4 (131 aa).

In terms of domain architecture, PINc spans 4-106 (IVPDTNFLIY…IVATNDKELK (103 aa)). Positions 7 and 102 each coordinate Mg(2+).

It belongs to the PINc/VapC protein family. It depends on Mg(2+) as a cofactor.

Its function is as follows. Toxic component of a type II toxin-antitoxin (TA) system. An RNase. Its cognate antitoxin is VapB4. This chain is Ribonuclease VapC4, found in Methanocaldococcus jannaschii (strain ATCC 43067 / DSM 2661 / JAL-1 / JCM 10045 / NBRC 100440) (Methanococcus jannaschii).